The following is a 631-amino-acid chain: Nucleoside triphosphatase I (631 aa).

The region spanning 42–204 (FLGLDSMHSL…TMLVNLLRPG (163 aa)) is the Helicase ATP-binding domain. 55-62 (HETGVGKT) serves as a coordination point for ATP. The short motif at 141 to 144 (DECH) is the DEXH box element. One can recognise a Helicase C-terminal domain in the interval 367 to 532 (KFIDVCLGIL…EFVQLFRVFK (166 aa)). The binding to the cap-specific mRNA (nucleoside-2'-O-)-methyltransferase stretch occupies residues 457–524 (DIFILDMTWN…EIIQSKSKEF (68 aa)).

This sequence belongs to the helicase family. NPH I subfamily. Monomer. Interacts (via C-terminus) with RAP94/OPG109 (via N-terminus). Interacts with the cap-specific mRNA (nucleoside-2'-O-)-methyltransferase OPG102.

It localises to the virion. The catalysed reaction is a ribonucleoside 5'-triphosphate + H2O = a ribonucleoside 5'-diphosphate + phosphate + H(+). In terms of biological role, DNA-dependent ATPase that acts as a 5' to 3' translocase on single-stranded DNA and thereby plays a role in transcription termination of viral early genes. Uses forward translocation in concert with the viral RNA polymerase RAP94/OPG109 subunit and the capping enzyme/VTF to catalyze release of UUUUUNU-containing nascent RNA from the elongation complex. In addition, acts as a positive elongation factor to assist transcription through problematic sequences. The chain is Nucleoside triphosphatase I (OPG123) from Bos taurus (Bovine).